The sequence spans 502 residues: NAD(P)H-quinone oxidoreductase chain 4, chloroplastic (502 aa).

Transmembrane regions (helical) follow at residues 4–24 (FPWL…IFFV), 37–57 (YTIC…CYHF), 86–106 (GLSI…TLAA), 113–131 (SRLF…VGSF), 136–156 (LLLF…LLSM), 169–189 (FILY…GMGL), 210–230 (GLEI…SPII), 244–264 (HYST…YGLV), 274–294 (AHSI…IYAA), 307–327 (IAYS…SITD), 332–352 (GAIL…FLAG), 388–408 (LALP…GIIT), 418–438 (IVIS…SLSM), and 464–484 (LFVS…PDFV).

The protein belongs to the complex I subunit 4 family.

It localises to the plastid. It is found in the chloroplast thylakoid membrane. The catalysed reaction is a plastoquinone + NADH + (n+1) H(+)(in) = a plastoquinol + NAD(+) + n H(+)(out). It catalyses the reaction a plastoquinone + NADPH + (n+1) H(+)(in) = a plastoquinol + NADP(+) + n H(+)(out). This Calycanthus floridus var. glaucus (Eastern sweetshrub) protein is NAD(P)H-quinone oxidoreductase chain 4, chloroplastic.